The chain runs to 82 residues: Large ribosomal subunit protein bL31B (82 aa).

It belongs to the bacterial ribosomal protein bL31 family. Type B subfamily. In terms of assembly, part of the 50S ribosomal subunit.

This Bacillus velezensis (strain DSM 23117 / BGSC 10A6 / LMG 26770 / FZB42) (Bacillus amyloliquefaciens subsp. plantarum) protein is Large ribosomal subunit protein bL31B.